The sequence spans 353 residues: Lipase-specific foldase (353 aa).

The Cytoplasmic portion of the chain corresponds to 1 to 19; sequence MAQADRPARGGLAARPMRG. The helical transmembrane segment at 20–40 threads the bilayer; sequence ASFALAGLVACAACAAVVLWL. Topologically, residues 41–353 are periplasmic; that stretch reads RPAAPSPAPA…AASLDRGAGG (313 aa).

It belongs to the lipase chaperone family. In terms of assembly, monomer. Interacts with lipase (lip).

The protein resides in the cell inner membrane. Involved in the folding of the extracellular lipase (lip) during its passage through the periplasm. This Burkholderia plantarii protein is Lipase-specific foldase.